A 62-amino-acid chain; its full sequence is Photosystem II reaction center protein Z (62 aa).

Transmembrane regions (helical) follow at residues 8-28 (AVFA…VVLA) and 41-61 (FSGA…NSLI).

It belongs to the PsbZ family. In terms of assembly, PSII is composed of 1 copy each of membrane proteins PsbA, PsbB, PsbC, PsbD, PsbE, PsbF, PsbH, PsbI, PsbJ, PsbK, PsbL, PsbM, PsbT, PsbY, PsbZ, Psb30/Ycf12, at least 3 peripheral proteins of the oxygen-evolving complex and a large number of cofactors. It forms dimeric complexes.

The protein resides in the plastid. It is found in the chloroplast thylakoid membrane. Its function is as follows. May control the interaction of photosystem II (PSII) cores with the light-harvesting antenna, regulates electron flow through the 2 photosystem reaction centers. PSII is a light-driven water plastoquinone oxidoreductase, using light energy to abstract electrons from H(2)O, generating a proton gradient subsequently used for ATP formation. In Huperzia lucidula (Shining clubmoss), this protein is Photosystem II reaction center protein Z.